The following is a 325-amino-acid chain: Ferrochelatase (325 aa).

Residues His172 and Glu267 each contribute to the Fe cation site.

Belongs to the ferrochelatase family.

Its subcellular location is the cytoplasm. It catalyses the reaction heme b + 2 H(+) = protoporphyrin IX + Fe(2+). It participates in porphyrin-containing compound metabolism; protoheme biosynthesis; protoheme from protoporphyrin-IX: step 1/1. In terms of biological role, catalyzes the ferrous insertion into protoporphyrin IX. This is Ferrochelatase from Acidobacterium capsulatum (strain ATCC 51196 / DSM 11244 / BCRC 80197 / JCM 7670 / NBRC 15755 / NCIMB 13165 / 161).